The sequence spans 109 residues: Nucleoid-associated protein HAPS_1040 (109 aa).

The interval 1 to 21 is disordered; it reads MFGKGGLGGLMKQAQQMQERM. A compositionally biased stretch (low complexity) spans 10-19; sequence LMKQAQQMQE.

This sequence belongs to the YbaB/EbfC family. As to quaternary structure, homodimer.

The protein resides in the cytoplasm. The protein localises to the nucleoid. Binds to DNA and alters its conformation. May be involved in regulation of gene expression, nucleoid organization and DNA protection. The protein is Nucleoid-associated protein HAPS_1040 of Glaesserella parasuis serovar 5 (strain SH0165) (Haemophilus parasuis).